The sequence spans 140 residues: Phosphoribosyl-AMP cyclohydrolase (140 aa).

Aspartate 78 lines the Mg(2+) pocket. Cysteine 79 provides a ligand contact to Zn(2+). 2 residues coordinate Mg(2+): aspartate 80 and aspartate 82. 2 residues coordinate Zn(2+): cysteine 96 and cysteine 103.

This sequence belongs to the PRA-CH family. As to quaternary structure, homodimer. It depends on Mg(2+) as a cofactor. Zn(2+) is required as a cofactor.

The protein resides in the cytoplasm. It catalyses the reaction 1-(5-phospho-beta-D-ribosyl)-5'-AMP + H2O = 1-(5-phospho-beta-D-ribosyl)-5-[(5-phospho-beta-D-ribosylamino)methylideneamino]imidazole-4-carboxamide. It functions in the pathway amino-acid biosynthesis; L-histidine biosynthesis; L-histidine from 5-phospho-alpha-D-ribose 1-diphosphate: step 3/9. In terms of biological role, catalyzes the hydrolysis of the adenine ring of phosphoribosyl-AMP. The protein is Phosphoribosyl-AMP cyclohydrolase of Ralstonia pickettii (strain 12J).